A 570-amino-acid chain; its full sequence is Zinc finger protein 76 (570 aa).

A Glycyl lysine isopeptide (Lys-Gly) (interchain with G-Cter in SUMO2) cross-link involves residue lysine 24. Tandem repeats lie at residues 34 to 45 (IQLEDGTTAYIH), 62 to 73 (VQLEDGSMAYIH), and 88 to 99 (VQLEDGSTAYIH). The interval 34 to 99 (IQLEDGTTAY…LEDGSTAYIH (66 aa)) is 3 X 12 AA approximate repeats. C2H2-type zinc fingers lie at residues 165-189 (FRCG…ERAH), 195-219 (YRCD…VRTH), 225-249 (YKCP…VRTH), 255-279 (FQCP…VRTH), 285-309 (YTCP…VRIH), 315-339 (YVCT…HVVH), and 345-368 (YTCS…RSAH). The disordered stretch occupies residues 365 to 401 (RSAHGELEATEESEQALYEQQQLEAASAAEESPPPKR). Positions 379–395 (QALYEQQQLEAASAAEE) are enriched in low complexity.

Belongs to the krueppel C2H2-type zinc-finger protein family. As to expression, testis.

It localises to the nucleus. May be involved in transcriptional regulation. This Homo sapiens (Human) protein is Zinc finger protein 76 (ZNF76).